The following is a 765-amino-acid chain: Protein BCH2 (765 aa).

Residues 1–31 (MSFLWGSTKSKKGKNKKAAGSLPSGVVPQQR) are disordered. Positions 735–765 (LECLSKNRNEACLAYERPLPDLPSTIKPLAD) are CHS5-binding.

Belongs to the CHAPS family. In terms of assembly, component of the CHS5/6 complex composed of the 4 CHAPS proteins BCH1, BCH2, BUD7, and CHS6 as well as at least CHS5 and GTP-bound ARF1. The complex interacts with the cargo protein CHS3.

The protein resides in the golgi apparatus. It localises to the trans-Golgi network membrane. In terms of biological role, member of the CHS5-ARF1P-binding proteins (CHAPS) which mediates export of specific cargo proteins, including chitin synthase CHS3. In Saccharomyces cerevisiae (strain ATCC 204508 / S288c) (Baker's yeast), this protein is Protein BCH2 (BCH2).